The chain runs to 508 residues: MGFAKKEHEFLSAIGLAPENPGGFINGKWKASGPVISTVSPSNNQEIAKVTEVSMEEYEEGLRSCNDAAKTWKSLPAPKRGEIVRQIGDALREKLQHLGKLVSLEMGKILAEGIGEVQEVIYMCDFAVGLSRQLNGSIIPSERPDHMMFEVWNPLGIVGVITAFNFPCAVLGWNACIALVCGNCVVWKGAPTTPLVTIAVTKLIAEVLEKNNLPAAIFTAFCGGAEIGEAIAKDTRIPLVSFTGSSKVGAKVQQIVTERFGKCLLELSGNNALIVMDDADVGLAVRSIFFAAVGTAGQRCTTCRRLYLHESIYQNVLDKLVGLYNQVKIGDPLEEGTLVGPVHTKASRENFEKGISTIKSQGGKILTGGSVIESDGNFVQPTIVEIASNASVVKEELFGPVLYVMKFKTLEEAIALNNSVPQGLSSSIFTSKPNTIFKWIGPHGSDCGIVNVNIPTNGAEIGGAFGGEKATGGGREAGSDSWKQYMRRSTCTINYGTELPLAQGINFG.

NAD(+) is bound at residue 244–249 (GSSKVG). Glu-266 acts as the Proton acceptor in catalysis. Catalysis depends on Cys-300, which acts as the Nucleophile.

This sequence belongs to the aldehyde dehydrogenase family. As to quaternary structure, homotetramer.

It carries out the reaction an aldehyde + NAD(+) + H2O = a carboxylate + NADH + 2 H(+). Functionally, may play a role in fruit development. This Malus domestica (Apple) protein is Aldehyde dehydrogenase family 7 member A1.